We begin with the raw amino-acid sequence, 505 residues long: Protein disulfide-isomerase A3 (505 aa).

Positions 1–24 (MSVPRPSRAALLLLVPLLALSAGA) are cleaved as a signal peptide. Thioredoxin domains lie at 25–131 (SDVV…KQAG) and 341–483 (SRDG…REAT). Catalysis depends on nucleophile residues C55 and C58. 3 cysteine pairs are disulfide-bonded: C55–C58, C83–C90, and C404–C407. Catalysis depends on nucleophile residues C404 and C407. The tract at residues 486–505 (PVLQEEDKAKKSKKKAKEDL) is disordered. The segment covering 495–505 (KKSKKKAKEDL) has biased composition (basic residues). Residues 502–505 (KEDL) carry the Prevents secretion from ER motif.

The protein belongs to the protein disulfide isomerase family.

Its subcellular location is the endoplasmic reticulum. The protein localises to the endoplasmic reticulum lumen. The protein resides in the melanosome. The enzyme catalyses Catalyzes the rearrangement of -S-S- bonds in proteins.. Its function is as follows. Protein disulfide isomerase that catalyzes the formation, isomerization, and reduction or oxidation of disulfide bonds in client proteins and functions as a protein folding chaperone. In Gallus gallus (Chicken), this protein is Protein disulfide-isomerase A3 (PDIA3).